The sequence spans 445 residues: Probable fructoselysine/psicoselysine transporter FrlA (445 aa).

A run of 11 helical transmembrane segments spans residues 10 to 32, 39 to 61, 97 to 119, 126 to 143, 153 to 175, 188 to 210, 230 to 252, 272 to 294, 341 to 363, 384 to 406, and 411 to 433; these read LGFWAVLAIAVGTTVGSGIFVSV, AGTPWLTVLAFVIGGLIVIPQMC, FWANDAPSLSIMALAIVSNLGFL, LGKFIAAGLIIAFMLLHL, QTLITIAKIIPFTIVIGLGIFWF, IGATGSFMALLAGISATSWSYTG, RALIGSCLLVLVLYTLLALVISG, WIPALGSTAGIFVAITAMIVILG, GIFFIFVSDLTSLLGYFTLVMCF, LWRTPAFGLMTPLAIASSLILVA, and WAPIPGLICAVIVIATGLPAYAF.

The protein belongs to the amino acid-polyamine-organocation (APC) superfamily.

It is found in the cell inner membrane. It catalyses the reaction N(6)-(D-fructosyl)-L-lysine(in) = N(6)-(D-fructosyl)-L-lysine(out). It carries out the reaction N(6)-(D-psicosyl)-L-lysine(in) = N(6)-(D-psicosyl)-L-lysine(out). It participates in carbohydrate metabolism; fructoselysine degradation. Functionally, is likely involved in the transport of fructoselysine and psicoselysine to the cytoplasm, where they are degraded. This Escherichia coli O157:H7 protein is Probable fructoselysine/psicoselysine transporter FrlA (frlA).